We begin with the raw amino-acid sequence, 179 residues long: ATP-dependent protease subunit HslV (179 aa).

Thr7 is an active-site residue. 3 residues coordinate Na(+): Gly162, Cys165, and Thr168.

This sequence belongs to the peptidase T1B family. HslV subfamily. In terms of assembly, a double ring-shaped homohexamer of HslV is capped on each side by a ring-shaped HslU homohexamer. The assembly of the HslU/HslV complex is dependent on binding of ATP.

Its subcellular location is the cytoplasm. It carries out the reaction ATP-dependent cleavage of peptide bonds with broad specificity.. Its activity is regulated as follows. Allosterically activated by HslU binding. In terms of biological role, protease subunit of a proteasome-like degradation complex believed to be a general protein degrading machinery. This is ATP-dependent protease subunit HslV from Saccharophagus degradans (strain 2-40 / ATCC 43961 / DSM 17024).